A 196-amino-acid polypeptide reads, in one-letter code: Cupin-domain-containing oxidoreductase srdD (196 aa).

Positions 99-165 (DFGPGVESPL…GNGTLPGRVM (67 aa)) are cupin-like domain.

Belongs to the virC family.

Highly reducing polyketide synthase; part of the gene cluster that mediates the biosynthesis of sordarial, a salicylic aldehyde structurally related to the phytotoxin pyriculol. The most interesting aspect of this pathway is formation of an aromatic product from the highly reducing polyketide synthase srdA. SrdA synthesizes a reduced polyketide chain from one molecule of acetyl-CoA and five molecules of malonyl-CoA. The polyketide chain is then reductively released as an aldehyde. The oxidoreductases srdC, srdD and srdE then oxidize one of the hydroxy groups to facilitate the intramolecular aldol condensation, followed by dehydration to yield a salicylic aldehyde. This aldehyde can undergo facile reduction by endogenous reductases to yield the alcohol 1-hydroxy-2-hydroxymethyl-3-pent-1,3-dienylbenzene. The flavin-dependent srdI counteract against the propensity of the aldehydes to be reduced under physiological conditions and is responsible for reoxidizing 1-hydroxy-2-hydroxymethyl-3-pent-1,3-dienylbenzene back to the salicylic aldehyde. This salicylic aldehyde is then selectively epoxidized by the cupin-domain-containing oxidoreductase srdB to yield the epoxide, which can be hydrolyzed stereoselectively by the hydrolase srdG to give the final product sordarial. The protein is Cupin-domain-containing oxidoreductase srdD of Neurospora crassa (strain ATCC 24698 / 74-OR23-1A / CBS 708.71 / DSM 1257 / FGSC 987).